We begin with the raw amino-acid sequence, 232 residues long: Lipoarabinomannan carrier protein LprG (232 aa).

An N-terminal signal peptide occupies residues 1–21 (MQTRLTAILAAFLTAVALLAG). The N-palmitoyl cysteine moiety is linked to residue Cys-22. Residue Cys-22 is the site of S-diacylglycerol cysteine attachment.

It belongs to the LppX/LprAFG lipoprotein family. In terms of processing, modified by Lgt on Cys-22 with an S-linked diacylglyceral, signal peptide is removed by LspA, Cys-22 is further modifed with a fatty acid on its amino group by Lnt yielding a triacylated protein.

It is found in the cell inner membrane. In terms of biological role, helps membrane protein MHAS_02168/C731_2106 (P55) transport triacylglycerides (TAG) across the inner cell membrane into the periplasm and probably ultimately to the outer membrane. Binds TAG in its hydrophobic cavity and transfers it between lipid bilayers. TAG probably regulates lipid metabolism and growth regulation and plays a structural role in the outer membrane. Also binds mannosides, lipoarabinomannan and lipomannan and various glycolipids in the same cavity. The lprG-MHAS_02167/C731_2107 operon complements the vancomycin sensitivity of an M.smegmatis knockout of the same operon. The sequence is that of Lipoarabinomannan carrier protein LprG from Mycolicibacterium hassiacum (strain DSM 44199 / CIP 105218 / JCM 12690 / 3849) (Mycobacterium hassiacum).